The chain runs to 354 residues: GIVMYTTSSLTTTLGFPKDMWIGRSFIDFVHPRDRNTFASQITSGLAVPKIVNGQSPGNPASTMVCRIRRYRGLTTGFGVKDRVVTFMPFLLKFTFKNVSDEEGKVIYLVIQATQFFSAFRIPSEVVSKAVPFVMRHAANGNLEYIDPESVPYLGYLPQDVTDKDALQLYHPEDLDYLQQVYETIVKEGGVPRTKAYRMMAQNGDYLKLETEWSSFINPWSKRLDFVIGKHHIIEGPSNPDVFQSPDPEKAVAMSEEEKAKEQKYRRDIIRTMNEVLTKPAEVAKQQMTKRCQDLASFMESLMEEQQPKVDEDLRLDIQDPDHSYYQRDSVMLGGISPHHDYNDSKSSTGTPLS.

PAS domains lie at 1–55 (GIVM…VNGQ) and 133–235 (FVMR…HIIE). The segment at 318 to 354 (IQDPDHSYYQRDSVMLGGISPHHDYNDSKSSTGTPLS) is disordered. The segment covering 345–354 (SKSSTGTPLS) has biased composition (polar residues).

As to quaternary structure, forms a heterodimer with timeless (TIM); the complex then translocates into the nucleus. Post-translationally, phosphorylated with a circadian rhythmicity.

Its subcellular location is the nucleus. Its function is as follows. Involved in the generation of biological rhythms. The biological cycle depends on the rhythmic formation and nuclear localization of the tim-per complex. Light induces the degradation of tim, which promotes elimination of per. Nuclear activity of the heterodimer coordinatively regulates per and tim transcription negative feedback loop. Behaves as a negative element in circadian transcriptional loop. Does not appear to bind DNA, suggesting indirect transcriptional inhibition. This Manduca sexta (Tobacco hawkmoth) protein is Period circadian protein (per).